Consider the following 527-residue polypeptide: Triostin synthetase I (527 aa).

187–188 lines the ATP pocket; that stretch reads GG. Position 230 to 231 (230 to 231) interacts with substrate; it reads HQ. ATP-binding positions include 300-302, Asp406, Arg421, and Lys512; that span reads SAP. Residue Lys512 coordinates substrate.

The protein belongs to the ATP-dependent AMP-binding enzyme family. Monomer.

Its function is as follows. Involved in triostin biosynthesis. Activates quinoxaline-2-carboxylic acid (QA) via catalysis of the ATP-pyrophosphate exchange reaction dependent on QA, and the formation of the corresponding adenylate. Also activates structural analogs of QA such as quinoline-2-carboxylic acid and thieno[3,2-b]pyridine-5-carboxylic acid, but not quinoline-3-carboxylic acid, quinoline-4-carboxylic acid, pyridine-2-carboxylic acid or 2-pyrazinecarboxylic acid. The chain is Triostin synthetase I (trsA) from Streptomyces triostinicus.